The sequence spans 70 residues: Putative membrane protein insertion efficiency factor (70 aa).

It belongs to the UPF0161 family.

The protein resides in the cell membrane. In terms of biological role, could be involved in insertion of integral membrane proteins into the membrane. The polypeptide is Putative membrane protein insertion efficiency factor (Rubrobacter xylanophilus (strain DSM 9941 / JCM 11954 / NBRC 16129 / PRD-1)).